We begin with the raw amino-acid sequence, 251 residues long: NADH-quinone oxidoreductase subunit C (251 aa).

Residues 1-34 (MSDANNTAGDANEVNPEKDLSAENLPGQRGQGGE) are disordered.

It belongs to the complex I 30 kDa subunit family. NDH-1 is composed of 14 different subunits. Subunits NuoB, C, D, E, F, and G constitute the peripheral sector of the complex.

The protein resides in the cell membrane. It carries out the reaction a quinone + NADH + 5 H(+)(in) = a quinol + NAD(+) + 4 H(+)(out). Its function is as follows. NDH-1 shuttles electrons from NADH, via FMN and iron-sulfur (Fe-S) centers, to quinones in the respiratory chain. The immediate electron acceptor for the enzyme in this species is believed to be a menaquinone. Couples the redox reaction to proton translocation (for every two electrons transferred, four hydrogen ions are translocated across the cytoplasmic membrane), and thus conserves the redox energy in a proton gradient. This chain is NADH-quinone oxidoreductase subunit C, found in Streptomyces coelicolor (strain ATCC BAA-471 / A3(2) / M145).